The chain runs to 295 residues: Protease HtpX (295 aa).

The next 2 helical transmembrane spans lie at 4-24 (IVLF…ILSL) and 34-54 (GLMI…LLMS). His-139 is a binding site for Zn(2+). Residue Glu-140 is part of the active site. Position 143 (His-143) interacts with Zn(2+). Helical transmembrane passes span 147–167 (GDMV…IFIS) and 194–214 (IVYM…ASII). Glu-223 provides a ligand contact to Zn(2+).

This sequence belongs to the peptidase M48B family. It depends on Zn(2+) as a cofactor.

The protein resides in the cell inner membrane. This is Protease HtpX from Photorhabdus laumondii subsp. laumondii (strain DSM 15139 / CIP 105565 / TT01) (Photorhabdus luminescens subsp. laumondii).